A 729-amino-acid chain; its full sequence is Fatty acid oxidation complex subunit alpha (729 aa).

An enoyl-CoA hydratase/isomerase region spans residues 1-189; it reads MLYKGDTLYL…KIGLVDGVVK (189 aa). D296 is a binding site for substrate. The interval 311–729 is 3-hydroxyacyl-CoA dehydrogenase; sequence ETPKQAAVLG…ARPVGSLKTA (419 aa). Residues M324, D343, 400–402, K407, and S429 each bind NAD(+); that span reads VVE. H450 (for 3-hydroxyacyl-CoA dehydrogenase activity) is an active-site residue. NAD(+) is bound at residue N453. Substrate is bound by residues N500 and Y660. The tract at residues 708-729 is disordered; it reads RHNEPYYPPVEPARPVGSLKTA.

The protein in the N-terminal section; belongs to the enoyl-CoA hydratase/isomerase family. This sequence in the C-terminal section; belongs to the 3-hydroxyacyl-CoA dehydrogenase family. As to quaternary structure, heterotetramer of two alpha chains (FadB) and two beta chains (FadA).

The enzyme catalyses a (3S)-3-hydroxyacyl-CoA + NAD(+) = a 3-oxoacyl-CoA + NADH + H(+). It catalyses the reaction a (3S)-3-hydroxyacyl-CoA = a (2E)-enoyl-CoA + H2O. It carries out the reaction a 4-saturated-(3S)-3-hydroxyacyl-CoA = a (3E)-enoyl-CoA + H2O. The catalysed reaction is (3S)-3-hydroxybutanoyl-CoA = (3R)-3-hydroxybutanoyl-CoA. The enzyme catalyses a (3Z)-enoyl-CoA = a 4-saturated (2E)-enoyl-CoA. It catalyses the reaction a (3E)-enoyl-CoA = a 4-saturated (2E)-enoyl-CoA. It functions in the pathway lipid metabolism; fatty acid beta-oxidation. Its function is as follows. Involved in the aerobic and anaerobic degradation of long-chain fatty acids via beta-oxidation cycle. Catalyzes the formation of 3-oxoacyl-CoA from enoyl-CoA via L-3-hydroxyacyl-CoA. It can also use D-3-hydroxyacyl-CoA and cis-3-enoyl-CoA as substrate. This Salmonella enteritidis PT4 (strain P125109) protein is Fatty acid oxidation complex subunit alpha.